The chain runs to 115 residues: Large ribosomal subunit protein bL19 (115 aa).

The protein belongs to the bacterial ribosomal protein bL19 family.

In terms of biological role, this protein is located at the 30S-50S ribosomal subunit interface and may play a role in the structure and function of the aminoacyl-tRNA binding site. The polypeptide is Large ribosomal subunit protein bL19 (Syntrophotalea carbinolica (strain DSM 2380 / NBRC 103641 / GraBd1) (Pelobacter carbinolicus)).